A 130-amino-acid chain; its full sequence is Small ribosomal subunit protein uS11 (130 aa).

Belongs to the universal ribosomal protein uS11 family. As to quaternary structure, part of the 30S ribosomal subunit. Interacts with proteins S7 and S18. Binds to IF-3.

In terms of biological role, located on the platform of the 30S subunit, it bridges several disparate RNA helices of the 16S rRNA. Forms part of the Shine-Dalgarno cleft in the 70S ribosome. The chain is Small ribosomal subunit protein uS11 from Campylobacter jejuni subsp. jejuni serotype O:6 (strain 81116 / NCTC 11828).